Here is a 1152-residue protein sequence, read N- to C-terminus: DNA-directed RNA polymerase subunit beta' (1152 aa).

Zn(2+) is bound by residues Cys60, Cys62, Cys75, and Cys78. 3 residues coordinate Mg(2+): Asp449, Asp451, and Asp453. Zn(2+)-binding residues include Cys779, Cys853, Cys860, and Cys863.

It belongs to the RNA polymerase beta' chain family. As to quaternary structure, the RNAP catalytic core consists of 2 alpha, 1 beta, 1 beta' and 1 omega subunit. When a sigma factor is associated with the core the holoenzyme is formed, which can initiate transcription. It depends on Mg(2+) as a cofactor. Requires Zn(2+) as cofactor.

The catalysed reaction is RNA(n) + a ribonucleoside 5'-triphosphate = RNA(n+1) + diphosphate. In terms of biological role, DNA-dependent RNA polymerase catalyzes the transcription of DNA into RNA using the four ribonucleoside triphosphates as substrates. This Carboxydothermus hydrogenoformans (strain ATCC BAA-161 / DSM 6008 / Z-2901) protein is DNA-directed RNA polymerase subunit beta'.